Reading from the N-terminus, the 275-residue chain is Sulfur carrier protein FdhD (275 aa).

The active-site Cysteine persulfide intermediate is the Cys-121. A Mo-bis(molybdopterin guanine dinucleotide)-binding site is contributed by 258 to 263; that stretch reads FSKPGR.

Belongs to the FdhD family.

It is found in the cytoplasm. In terms of biological role, required for formate dehydrogenase (FDH) activity. Acts as a sulfur carrier protein that transfers sulfur from IscS to the molybdenum cofactor prior to its insertion into FDH. This Yersinia enterocolitica serotype O:8 / biotype 1B (strain NCTC 13174 / 8081) protein is Sulfur carrier protein FdhD.